We begin with the raw amino-acid sequence, 205 residues long: Ras-related protein rab-6.1 (205 aa).

GTP is bound by residues 18 to 25, Thr43, 66 to 70, and 124 to 127; these read GEQSVGKT, DTAGQ, and NKTD. Residues Cys203 and Cys205 are each lipidated (S-geranylgeranyl cysteine). Cys205 bears the Cysteine methyl ester mark.

Belongs to the small GTPase superfamily. Rab family. As to quaternary structure, interacts with GARP complex component vps-52. In terms of tissue distribution, highly expressed in body wall muscle, intestine, somatic gonad, distal tip cells, vulva, and neurons including AVB, AVD, RIG, and PVC (at protein level). Not expressed in AVA and RMDV neurons.

It localises to the cell membrane. Its subcellular location is the cell projection. It is found in the dendrite. The protein localises to the perikaryon. The protein resides in the golgi apparatus. It localises to the cytoplasmic vesicle. Its subcellular location is the secretory vesicle. Functionally, the small GTPases Rab are key regulators of intracellular membrane trafficking, from the formation of transport vesicles to their fusion with membranes. Rabs cycle between an inactive GDP-bound form and an active GTP-bound form that is able to recruit to membranes different set of downstream effectors directly responsible for vesicle formation, movement, tethering and fusion. In its active GTP-bound form, acts redundantly with rab-6.2 (in its active GTP-bound form) to positively regulate the retrograde trafficking of cargo molecules from endosomes to Golgi structures. Required for the retrograde trafficking of glr-1, a subunit of AMPA-type glutamate receptors (AMPRs), out of early endosomes and into the Golgi compartment in neurons. Together with rab-6.2, promotes the retrograde trafficking of mig-14 from endosomes to Golgi structures in the intestine. In oocytes, in its active GTP-bound form, involved in the membrane fusion and exocytosis of secretory vesicles (cortical granules) to play a role in the remodeling of the embryo surface following fertilization. Recruits sep-1 to cortical granules (derived from the Golgi complex) for exocytosis during the oocyte-to-embryo transition. Required for seam cell division and alae formation. Promotes spontaneous reversals in locomotion. The sequence is that of Ras-related protein rab-6.1 from Caenorhabditis elegans.